The sequence spans 155 residues: Ribosome maturation factor RimP (155 aa).

Belongs to the RimP family.

It localises to the cytoplasm. Its function is as follows. Required for maturation of 30S ribosomal subunits. The chain is Ribosome maturation factor RimP from Salinibacter ruber (strain DSM 13855 / M31).